Reading from the N-terminus, the 432-residue chain is Glutamate-1-semialdehyde 2,1-aminomutase (432 aa).

Residue Lys272 is modified to N6-(pyridoxal phosphate)lysine.

It belongs to the class-III pyridoxal-phosphate-dependent aminotransferase family. HemL subfamily. Homodimer. The cofactor is pyridoxal 5'-phosphate.

The protein localises to the cytoplasm. The enzyme catalyses (S)-4-amino-5-oxopentanoate = 5-aminolevulinate. It participates in porphyrin-containing compound metabolism; protoporphyrin-IX biosynthesis; 5-aminolevulinate from L-glutamyl-tRNA(Glu): step 2/2. The protein operates within porphyrin-containing compound metabolism; chlorophyll biosynthesis. In Cyanothece sp. (strain PCC 7425 / ATCC 29141), this protein is Glutamate-1-semialdehyde 2,1-aminomutase.